The chain runs to 440 residues: Chromosome partition protein MukF (440 aa).

The segment at 208-236 (LSETSGTLRELQDTLEAAGDKLQANLLRI) is leucine-zipper.

It belongs to the MukF family. Interacts, and probably forms a ternary complex, with MukE and MukB via its C-terminal region. The complex formation is stimulated by calcium or magnesium. It is required for an interaction between MukE and MukB.

It localises to the cytoplasm. The protein resides in the nucleoid. Involved in chromosome condensation, segregation and cell cycle progression. May participate in facilitating chromosome segregation by condensation DNA from both sides of a centrally located replisome during cell division. Not required for mini-F plasmid partitioning. Probably acts via its interaction with MukB and MukE. Overexpression results in anucleate cells. It has a calcium binding activity. This chain is Chromosome partition protein MukF, found in Serratia proteamaculans (strain 568).